A 200-amino-acid polypeptide reads, in one-letter code: Small ribosomal subunit protein uS4 (200 aa).

The segment at 1 to 43 (MARYTGPRGRRDRRAGVMLSSMRKNPLEKKPYPPGEHGRDRQR) is disordered. The segment covering 25–43 (NPLEKKPYPPGEHGRDRQR) has biased composition (basic and acidic residues). The 67-residue stretch at 92 to 158 (LRMDNVVYRM…QPIQEAVEQV (67 aa)) folds into the S4 RNA-binding domain.

It belongs to the universal ribosomal protein uS4 family. As to quaternary structure, part of the 30S ribosomal subunit. Contacts protein S5. The interaction surface between S4 and S5 is involved in control of translational fidelity.

Its function is as follows. One of the primary rRNA binding proteins, it binds directly to 16S rRNA where it nucleates assembly of the body of the 30S subunit. In terms of biological role, with S5 and S12 plays an important role in translational accuracy. The sequence is that of Small ribosomal subunit protein uS4 from Rubrobacter xylanophilus (strain DSM 9941 / JCM 11954 / NBRC 16129 / PRD-1).